Reading from the N-terminus, the 138-residue chain is Small ribosomal subunit protein uS11c (138 aa).

The interval 1–23 (MAKPIQRIGSRRNGPIGSRKNGR) is disordered.

Belongs to the universal ribosomal protein uS11 family. In terms of assembly, part of the 30S ribosomal subunit.

The protein localises to the plastid. It localises to the chloroplast. This chain is Small ribosomal subunit protein uS11c, found in Platanus occidentalis (Sycamore).